The following is a 66-amino-acid chain: Small ribosomal subunit protein bS21 (66 aa).

Belongs to the bacterial ribosomal protein bS21 family.

The sequence is that of Small ribosomal subunit protein bS21 from Bdellovibrio bacteriovorus (strain ATCC 15356 / DSM 50701 / NCIMB 9529 / HD100).